Reading from the N-terminus, the 238-residue chain is Partner of Y14 and mago (238 aa).

A disordered region spans residues 1–183 (MTTYATDSQG…GADGHSDLSK (183 aa)). 2 stretches are compositionally biased toward basic and acidic residues: residues 65 to 77 (QKAREKREKEQRK) and 123 to 133 (LEQKQKEEQKA). Residues 136–155 (RQQAQDQRNSKQQQSQNQSK) show a composition bias toward low complexity. Residues 176–233 (DGHSDLSKKLRKLRKKIREIEVIEERLRASDGPRPDKDQIEKAKRKAEILKEIEELER) adopt a coiled-coil conformation.

Belongs to the pym family. In terms of assembly, interacts (via N-terminus) with mago and tsu/Y14; the interaction is direct.

The protein resides in the cytoplasm. It localises to the nucleus. In terms of biological role, regulator of the exon junction complex (EJC), a multiprotein complex that associates immediately upstream of the exon-exon junction on mRNAs and serves as a positional landmarks for the intron exon structure of genes and directs post-transcriptional processes in the cytoplasm such as mRNA export, nonsense-mediated mRNA decay (NMD) or translation. This is Partner of Y14 and mago from Culex quinquefasciatus (Southern house mosquito).